The chain runs to 97 residues: Large ribosomal subunit protein uL23 (97 aa).

Belongs to the universal ribosomal protein uL23 family. In terms of assembly, part of the 50S ribosomal subunit. Contacts protein L29, and trigger factor when it is bound to the ribosome.

In terms of biological role, one of the early assembly proteins it binds 23S rRNA. One of the proteins that surrounds the polypeptide exit tunnel on the outside of the ribosome. Forms the main docking site for trigger factor binding to the ribosome. The polypeptide is Large ribosomal subunit protein uL23 (Rhizobium rhizogenes (strain K84 / ATCC BAA-868) (Agrobacterium radiobacter)).